The primary structure comprises 253 residues: 5'-nucleotidase SurE (253 aa).

Asp8, Asp9, Ser40, and Asn93 together coordinate a divalent metal cation.

This sequence belongs to the SurE nucleotidase family. The cofactor is a divalent metal cation.

Its subcellular location is the cytoplasm. It catalyses the reaction a ribonucleoside 5'-phosphate + H2O = a ribonucleoside + phosphate. In terms of biological role, nucleotidase that shows phosphatase activity on nucleoside 5'-monophosphates. This Methylobacterium sp. (strain 4-46) protein is 5'-nucleotidase SurE.